Reading from the N-terminus, the 246-residue chain is tRNA (guanine-N(7)-)-methyltransferase (246 aa).

Residues Glu-77, Glu-102, Asp-129, and Asp-152 each contribute to the S-adenosyl-L-methionine site. Asp-152 is a catalytic residue. Substrate is bound by residues Lys-156, Asp-188, and 225–228 (TKFE).

This sequence belongs to the class I-like SAM-binding methyltransferase superfamily. TrmB family.

The catalysed reaction is guanosine(46) in tRNA + S-adenosyl-L-methionine = N(7)-methylguanosine(46) in tRNA + S-adenosyl-L-homocysteine. The protein operates within tRNA modification; N(7)-methylguanine-tRNA biosynthesis. Its function is as follows. Catalyzes the formation of N(7)-methylguanine at position 46 (m7G46) in tRNA. The polypeptide is tRNA (guanine-N(7)-)-methyltransferase (Haemophilus influenzae (strain PittEE)).